A 214-amino-acid chain; its full sequence is MIKAVLFDLDGTLINTNDLILKSFKHTFKTMLDLEPSEEEITMNYGRPLQEIFKSYDENRIEEMINCYRKINLELHDDECKEFADVDLMLKTLKSKGIKIGVVTSKKSDMAERGAKLMGIFKYFDTFITPEITTKHKPDGEPVLKACENLGVSPSEALMVGDSPYDILAGKNAGAKTCGVKYTALPLEKLGESNPDFYVDKPLEILDLVEKLNS.

Asp8 (nucleophile) is an active-site residue.

This sequence belongs to the HAD-like hydrolase superfamily. PpaX family. Mg(2+) is required as a cofactor.

It carries out the reaction diphosphate + H2O = 2 phosphate + H(+). This is Putative pyrophosphatase PpaX from Clostridium perfringens (strain 13 / Type A).